The chain runs to 167 residues: Ubiquitin-fold modifier-conjugating enzyme 1 (167 aa).

The Glycyl thioester intermediate role is filled by cysteine 116.

This sequence belongs to the ubiquitin-conjugating enzyme family. UFC1 subfamily. In terms of assembly, interacts with UBA5 (via C-terminus). Interacts with UFL1. Interacts with UFM1.

Functionally, E2-like enzyme which specifically catalyzes the second step in ufmylation. Accepts the ubiquitin-like modifier UFM1 from the E1 enzyme UBA5 and forms an intermediate with UFM1 via a thioester linkage. Ufmylation is involved in various processes, such as ribosome recycling, response to DNA damage, interferon response or reticulophagy (also called ER-phagy). The polypeptide is Ubiquitin-fold modifier-conjugating enzyme 1 (Osmerus mordax (Rainbow smelt)).